Consider the following 632-residue polypeptide: Sodium- and chloride-dependent GABA transporter 3 (632 aa).

The disordered stretch occupies residues 1 to 41; that stretch reads MTAEKALPLGNGKAAEEARESEAPGGGCSSGGAAPARHPRV. At 1–58 the chain is on the cytoplasmic side; the sequence is MTAEKALPLGNGKAAEEARESEAPGGGCSSGGAAPARHPRVKRDKAVHERGHWNNKVE. Residue serine 21 is modified to Phosphoserine. The next 3 helical transmembrane spans lie at 59–79, 87–106, and 131–151; these read FVLS…FPYL, AFLI…VFFL, and GIGY…IIIL. Residues 152–225 lie on the Extracellular side of the membrane; it reads AWAIFYLSNC…DGIEHIGNLR (74 aa). Asparagine 187, asparagine 190, and asparagine 198 each carry an N-linked (GlcNAc...) asparagine glycan. The next 9 membrane-spanning stretches (helical) occupy residues 226 to 244, 253 to 270, 306 to 323, 335 to 356, 389 to 408, 438 to 456, 473 to 493, 514 to 533, and 553 to 571; these read WELA…FCIW, VVYV…ILLI, IFFS…LGSY, IMLC…FSVL, MPLS…FLGL, LLIL…VMLT, GMCL…VYGS, WCWM…FFLI, and IGWL…WICI. Topologically, residues 572–632 are cytoplasmic; the sequence is TVWKTEGTLP…AAITEKETHF (61 aa).

It belongs to the sodium:neurotransmitter symporter (SNF) (TC 2.A.22) family. SLC6A11 subfamily. As to expression, widespread distribution in the brain.

It localises to the cell membrane. It catalyses the reaction 4-aminobutanoate(out) + chloride(out) + 2 Na(+)(out) = 4-aminobutanoate(in) + chloride(in) + 2 Na(+)(in). The catalysed reaction is taurine(out) + chloride(out) + 2 Na(+)(out) = taurine(in) + chloride(in) + 2 Na(+)(in). The enzyme catalyses beta-alanine(out) + chloride(out) + 2 Na(+)(out) = beta-alanine(in) + chloride(in) + 2 Na(+)(in). It carries out the reaction hypotaurine(out) + chloride(out) + 2 Na(+)(out) = hypotaurine(in) + chloride(in) + 2 Na(+)(in). With respect to regulation, GABA transport is inhibited by SNAP-5114. Its function is as follows. Mediates sodium- and chloride-dependent transport of gamma-aminobutyric acid (GABA). Can also mediate transport of beta-alanine and to a lower extent that of taurine and hypotaurine. The polypeptide is Sodium- and chloride-dependent GABA transporter 3 (SLC6A11) (Homo sapiens (Human)).